The chain runs to 372 residues: 3 beta-hydroxysteroid dehydrogenase/Delta 5--&gt;4-isomerase type 2 (372 aa).

The active-site Proton acceptor is Y154. K158 serves as a coordination point for NAD(+). The helical transmembrane segment at 287–307 threads the bilayer; that stretch reads LTLMYWIGFLLEVVSFLLSPI.

This sequence belongs to the 3-beta-HSD family. In terms of tissue distribution, expressed in adrenal gland, testis and ovary.

Its subcellular location is the endoplasmic reticulum membrane. It localises to the mitochondrion membrane. The catalysed reaction is a 3beta-hydroxy-Delta(5)-steroid + NAD(+) = a 3-oxo-Delta(5)-steroid + NADH + H(+). The enzyme catalyses a 3-oxo-Delta(5)-steroid = a 3-oxo-Delta(4)-steroid. It catalyses the reaction pregnenolone + NAD(+) = pregn-5-ene-3,20-dione + NADH + H(+). It carries out the reaction pregn-5-ene-3,20-dione = progesterone. The catalysed reaction is 3beta-hydroxyandrost-5-en-17-one + NAD(+) = androst-5-ene-3,17-dione + NADH + H(+). The enzyme catalyses androst-5-ene-3,17-dione = androst-4-ene-3,17-dione. It participates in lipid metabolism; steroid biosynthesis. Its function is as follows. 3-beta-HSD is a bifunctional enzyme, that catalyzes the oxidative conversion of Delta(5)-ene-3-beta-hydroxy steroid, and the oxidative conversion of ketosteroids. The 3-beta-HSD enzymatic system plays a crucial role in the biosynthesis of all classes of hormonal steroids. This chain is 3 beta-hydroxysteroid dehydrogenase/Delta 5--&gt;4-isomerase type 2, found in Homo sapiens (Human).